The following is a 416-amino-acid chain: Gamma-glutamyl phosphate reductase (416 aa).

It belongs to the gamma-glutamyl phosphate reductase family.

The protein resides in the cytoplasm. It carries out the reaction L-glutamate 5-semialdehyde + phosphate + NADP(+) = L-glutamyl 5-phosphate + NADPH + H(+). Its pathway is amino-acid biosynthesis; L-proline biosynthesis; L-glutamate 5-semialdehyde from L-glutamate: step 2/2. Functionally, catalyzes the NADPH-dependent reduction of L-glutamate 5-phosphate into L-glutamate 5-semialdehyde and phosphate. The product spontaneously undergoes cyclization to form 1-pyrroline-5-carboxylate. The sequence is that of Gamma-glutamyl phosphate reductase from Actinobacillus succinogenes (strain ATCC 55618 / DSM 22257 / CCUG 43843 / 130Z).